The chain runs to 180 residues: Large ribosomal subunit protein uL6 (180 aa).

This sequence belongs to the universal ribosomal protein uL6 family. Part of the 50S ribosomal subunit.

In terms of biological role, this protein binds to the 23S rRNA, and is important in its secondary structure. It is located near the subunit interface in the base of the L7/L12 stalk, and near the tRNA binding site of the peptidyltransferase center. The protein is Large ribosomal subunit protein uL6 of Borreliella burgdorferi (strain ATCC 35210 / DSM 4680 / CIP 102532 / B31) (Borrelia burgdorferi).